A 517-amino-acid polypeptide reads, in one-letter code: uncharacterized protein (517 aa).

3 disordered regions span residues 16-148, 156-175, and 216-351; these read KDES…TITK, VNKE…NTTT, and KLEK…EENE. Positions 48–75 are enriched in low complexity; it reads NNNNNNNNTTTTNNNTNNSNTSTSNNSK. The segment covering 84 to 112 has biased composition (acidic residues); the sequence is FDDDDDDGDEEDEEEEDDDDDDDDDDDET. Positions 127–143 are enriched in pro residues; that stretch reads QPQPQPQPQPQPQPPIK. The segment covering 236 to 252 has biased composition (polar residues); it reads VSSTLSNSFDPNIIHNQ. Positions 254–266 are enriched in pro residues; that stretch reads SPPPPPISIPIPL. Composition is skewed to low complexity over residues 271 to 320 and 327 to 347; these read NLNN…NSNI and SSSM…SNNN. A coiled-coil region spans residues 340–452; that stretch reads DNSSSNNNEE…HQNQQNSMNN (113 aa).

The protein belongs to the ENTR1 family.

This is an uncharacterized protein from Dictyostelium discoideum (Social amoeba).